The primary structure comprises 735 residues: Catalase-peroxidase (735 aa).

The tryptophyl-tyrosyl-methioninium (Trp-Tyr) (with M-249) cross-link spans 95-223 (WHSAGTYRTG…LAAVQMGLIY (129 aa)). Catalysis depends on His-96, which acts as the Proton acceptor. The segment at residues 223–249 (YVNPEGPDGVPDPIKSGIDIRETFARM) is a cross-link (tryptophyl-tyrosyl-methioninium (Tyr-Met) (with W-95)). His-264 serves as a coordination point for heme b.

Belongs to the peroxidase family. Peroxidase/catalase subfamily. As to quaternary structure, homodimer or homotetramer. Heme b serves as cofactor. Formation of the three residue Trp-Tyr-Met cross-link is important for the catalase, but not the peroxidase activity of the enzyme.

The catalysed reaction is H2O2 + AH2 = A + 2 H2O. It catalyses the reaction 2 H2O2 = O2 + 2 H2O. Functionally, bifunctional enzyme with both catalase and broad-spectrum peroxidase activity. The polypeptide is Catalase-peroxidase (Aliarcobacter butzleri (strain RM4018) (Arcobacter butzleri)).